The chain runs to 565 residues: Thiol:disulfide interchange protein DsbD (565 aa).

A signal peptide spans 1–19; it reads MAQRIFTLILLLCSTSVFA. 2 disulfides stabilise this stretch: Cys122-Cys128 and Cys182-Cys304. Helical transmembrane passes span 163 to 183, 208 to 228, 243 to 263, 296 to 316, 323 to 343, 357 to 377, and 384 to 404; these read LPFS…TPCV, LLTF…GLVV, YVLI…FGLF, IAGL…LLYI, WLGG…LMLI, WMEQ…VFLL, and VWGL…AFIT. The Thioredoxin domain occupies 434–565; sequence WAFGATHTAQ…FSAHLRDRQP (132 aa). Cysteines 480 and 483 form a disulfide.

The protein belongs to the thioredoxin family. DsbD subfamily.

The protein resides in the cell inner membrane. It catalyses the reaction [protein]-dithiol + NAD(+) = [protein]-disulfide + NADH + H(+). The catalysed reaction is [protein]-dithiol + NADP(+) = [protein]-disulfide + NADPH + H(+). Required to facilitate the formation of correct disulfide bonds in some periplasmic proteins and for the assembly of the periplasmic c-type cytochromes. Acts by transferring electrons from cytoplasmic thioredoxin to the periplasm. This transfer involves a cascade of disulfide bond formation and reduction steps. The chain is Thiol:disulfide interchange protein DsbD from Shigella flexneri serotype 5b (strain 8401).